Reading from the N-terminus, the 317-residue chain is Thiamine thiazole synthase (317 aa).

Residues cysteine 78, 99-100 (EA), glycine 107, and valine 172 each bind substrate. Cysteine 206 is modified (2,3-didehydroalanine (Cys)). Substrate contacts are provided by residues aspartate 208, histidine 223, methionine 275, and 285-287 (RMG).

This sequence belongs to the THI4 family. Homooctamer. The cofactor is Fe cation. Post-translationally, during the catalytic reaction, a sulfide is transferred from Cys-206 to a reaction intermediate, generating a dehydroalanine residue.

It is found in the cytoplasm. It localises to the nucleus. It catalyses the reaction [ADP-thiazole synthase]-L-cysteine + glycine + NAD(+) = [ADP-thiazole synthase]-dehydroalanine + ADP-5-ethyl-4-methylthiazole-2-carboxylate + nicotinamide + 3 H2O + 2 H(+). Functionally, involved in biosynthesis of the thiamine precursor thiazole. Catalyzes the conversion of NAD and glycine to adenosine diphosphate 5-(2-hydroxyethyl)-4-methylthiazole-2-carboxylic acid (ADT), an adenylated thiazole intermediate. The reaction includes an iron-dependent sulfide transfer from a conserved cysteine residue of the protein to a thiazole intermediate. The enzyme can only undergo a single turnover, which suggests it is a suicide enzyme. May have additional roles in adaptation to various stress conditions and in DNA damage tolerance. The chain is Thiamine thiazole synthase from Yarrowia lipolytica (strain CLIB 122 / E 150) (Yeast).